The chain runs to 279 residues: Large ribosomal subunit protein uL2 (279 aa).

The tract at residues 223–279 (PVAMNPVDHPMGGGEGRASGGHPRSRKGLPAKGFKTRSRTKASNKYIVERRKTRKKK) is disordered. Basic residues predominate over residues 245–264 (PRSRKGLPAKGFKTRSRTKA).

It belongs to the universal ribosomal protein uL2 family. Part of the 50S ribosomal subunit. Forms a bridge to the 30S subunit in the 70S ribosome.

In terms of biological role, one of the primary rRNA binding proteins. Required for association of the 30S and 50S subunits to form the 70S ribosome, for tRNA binding and peptide bond formation. It has been suggested to have peptidyltransferase activity; this is somewhat controversial. Makes several contacts with the 16S rRNA in the 70S ribosome. The sequence is that of Large ribosomal subunit protein uL2 from Christiangramia forsetii (strain DSM 17595 / CGMCC 1.15422 / KT0803) (Gramella forsetii).